The following is a 212-amino-acid chain: Adenylate kinase (212 aa).

ATP is bound at residue 10–15 (GAGKGT). An NMP region spans residues 30–59 (STGDMFRAAMANQTEMGRLAKSYIDKGELV). Residues threonine 31, arginine 36, 57–59 (ELV), 86–89 (GYPR), and glutamine 93 contribute to the AMP site. Residues 127–159 (GRIINRKTGETFHKVFNPPVDYKEEDYYQREDD) are LID. Residues arginine 128 and 137-138 (TF) each bind ATP. 2 residues coordinate AMP: arginine 156 and arginine 167. Glutamine 195 contributes to the ATP binding site.

It belongs to the adenylate kinase family. As to quaternary structure, monomer.

The protein resides in the cytoplasm. The enzyme catalyses AMP + ATP = 2 ADP. It participates in purine metabolism; AMP biosynthesis via salvage pathway; AMP from ADP: step 1/1. Functionally, catalyzes the reversible transfer of the terminal phosphate group between ATP and AMP. Plays an important role in cellular energy homeostasis and in adenine nucleotide metabolism. The protein is Adenylate kinase of Streptococcus pyogenes serotype M12 (strain MGAS2096).